Consider the following 409-residue polypeptide: Serine/threonine transporter SstT (409 aa).

9 helical membrane-spanning segments follow: residues 14 to 34, 48 to 68, 82 to 102, 141 to 161, 192 to 212, 216 to 236, 290 to 310, 322 to 342, and 357 to 377; these read GSLVLQILVGIIAGIIVATLS, FVGALKAIAPILVFILVAASI, IVILYLFGTFAAAVTAVLMSF, ALMTGNYIGILAWGVGLGLAL, IGIFGLVSSTFASTGFSAIAG, LLLVLLGAMAIMALIINPAIV, IPLGATINMGGAAITITILTL, ILTAILLSVVAGISACGASGV, and FGISNDIAMQVVAVGFIIGVI.

It belongs to the dicarboxylate/amino acid:cation symporter (DAACS) (TC 2.A.23) family.

Its subcellular location is the cell inner membrane. The enzyme catalyses L-serine(in) + Na(+)(in) = L-serine(out) + Na(+)(out). The catalysed reaction is L-threonine(in) + Na(+)(in) = L-threonine(out) + Na(+)(out). In terms of biological role, involved in the import of serine and threonine into the cell, with the concomitant import of sodium (symport system). This Shewanella woodyi (strain ATCC 51908 / MS32) protein is Serine/threonine transporter SstT.